A 611-amino-acid chain; its full sequence is Zinc metalloproteinase-disintegrin-like MTP9 (611 aa).

An N-terminal signal peptide occupies residues 1-20; that stretch reads MIEVLLVTICFTVFPYQGSS. A propeptide spanning residues 21–191 is cleaved from the precursor; the sequence is IILESGNVND…DEPIEKISQL (171 aa). One can recognise a Peptidase M12B domain in the interval 205–401; sequence KYIELYVVVD…VRPQCILNKP (197 aa). Glu208 contributes to the Ca(2+) binding site. The N-linked (GlcNAc...) asparagine glycan is linked to Asn282. Asp292 contributes to the Ca(2+) binding site. 3 cysteine pairs are disulfide-bonded: Cys316-Cys396, Cys356-Cys380, and Cys358-Cys363. 3 residues coordinate Zn(2+): His341, His345, and His351. Cys396, Asn399, Asn414, Phe416, Glu418, Glu421, and Asp424 together coordinate Ca(2+). The 85-residue stretch at 409–493 folds into the Disintegrin domain; it reads PPVCGNYFVE…ECPTDSFQRN (85 aa). Intrachain disulfides connect Cys412–Cys441, Cys423–Cys436, Cys425–Cys431, Cys435–Cys456, Cys447–Cys453, Cys452–Cys478, Cys465–Cys485, Cys472–Cys504, Cys497–Cys509, Cys516–Cys566, Cys531–Cys573, Cys541–Cys575, Cys544–Cys554, Cys561–Cys599, and Cys593–Cys604. The D/ECD-tripeptide motif lies at 471-473; the sequence is DCD. 4 residues coordinate Ca(2+): Asp473, Leu474, Glu476, and Asp488. 2 N-linked (GlcNAc...) asparagine glycosylation sites follow: Asn548 and Asn570.

This sequence belongs to the venom metalloproteinase (M12B) family. P-III subfamily. As to quaternary structure, monomer. Requires Zn(2+) as cofactor. Expressed by the venom gland.

It is found in the secreted. In terms of biological role, snake venom zinc metalloproteinase that may impair hemostasis in the prey. This chain is Zinc metalloproteinase-disintegrin-like MTP9, found in Drysdalia coronoides (White-lipped snake).